The following is a 746-amino-acid chain: MEHTYQYSWIIPFIPLPVPILLGVGLLLFPTATKNLRRMWTFLSIFLLSIVMIFSLYLSIQQIFLSCIHQNVWSWTINNEFSFEFGYFIDPLTSIMLILITTVGILVLIYSDNYMSHDQGYLRFFAYMGFFNTSMLGLVTSSNLIQVYFFWELVGMCSYLLIGFWFTRPIAANACQKAFVTNRVGDFGLLLGILGLYWITGSFEFQDLFEIFNNLILTNRVNLLFFTLCAFLLFVGPIAKSAQFPLHVWLPDAMEGPTPISALIHAATMVAAGIFLVARLLPIFIVIPSIMYIISLIGIITVLLGATLALAQKDIKRGLAYSTMSQLGYMMLALGMGSYRAALFHLITHAYSKALLFLGSGSIIHSMEAIVGYSPDKSQNMILMGGLTKHVPITKTAFLVGTLSLCGIPPLACFWSKDEILNDSFLFSPIFAIIACSTAGLTAFYMFRIYLLTFEGHLNTYFLNYSGKKSSSFYSISLWGKEEEKNLNKNFGLVPLLITNNTKRASVFCKKTYKISNNVRNQTFITVENFGLNTRTFYYPQESDNTILFPMLLLLLFTLFVGAIGIPFNQEGIDFDILSKLFMPSINLLHKNAQNFVDWYEFFRNATFSVSIALFGIFIAYCLYKPFYSSLLNLTVLNSFQTWSSKRIRWEKLINFVYNWSYNRGYIDAFFKTSLTESIIRLAKQTNFFDKRIIDGITNGVGITSFFVGEVTKYIGGSRISSYLFLYLSYVLIFLTILFFFYFEKF.

The next 16 membrane-spanning stretches (helical) occupy residues W9–F29, W40–I60, I89–I109, F125–I145, V147–T167, G185–F205, V221–S241, T258–A278, L280–I300, L327–I347, A354–S374, T396–S416, F425–Y445, I547–P567, F608–Y628, and Y723–F743.

It belongs to the complex I subunit 5 family. NDH is composed of at least 16 different subunits, 5 of which are encoded in the nucleus.

It localises to the plastid. The protein resides in the chloroplast thylakoid membrane. It catalyses the reaction a plastoquinone + NADH + (n+1) H(+)(in) = a plastoquinol + NAD(+) + n H(+)(out). It carries out the reaction a plastoquinone + NADPH + (n+1) H(+)(in) = a plastoquinol + NADP(+) + n H(+)(out). In terms of biological role, NDH shuttles electrons from NAD(P)H:plastoquinone, via FMN and iron-sulfur (Fe-S) centers, to quinones in the photosynthetic chain and possibly in a chloroplast respiratory chain. The immediate electron acceptor for the enzyme in this species is believed to be plastoquinone. Couples the redox reaction to proton translocation, and thus conserves the redox energy in a proton gradient. This Lobularia maritima (Sweet alyssum) protein is NAD(P)H-quinone oxidoreductase subunit 5, chloroplastic (ndhF).